The sequence spans 368 residues: DNA replication and repair protein RecF (368 aa).

30 to 37 is a binding site for ATP; the sequence is GNNAQGKT.

Belongs to the RecF family.

The protein localises to the cytoplasm. The RecF protein is involved in DNA metabolism; it is required for DNA replication and normal SOS inducibility. RecF binds preferentially to single-stranded, linear DNA. It also seems to bind ATP. The chain is DNA replication and repair protein RecF from Streptococcus pyogenes serotype M49 (strain NZ131).